The sequence spans 750 residues: Photosystem I P700 chlorophyll a apoprotein A1 (750 aa).

8 helical membrane-spanning segments follow: residues 70 to 93 (VFSA…FHGA), 156 to 179 (LYCT…FHYH), 195 to 219 (LNHH…HVSL), 291 to 309 (IAHH…GHMY), 346 to 369 (WHAQ…HHMY), 385 to 411 (LSLF…IFMV), 433 to 455 (AIIS…LYIH), and 531 to 549 (FLVH…LILL). Cys573 and Cys582 together coordinate [4Fe-4S] cluster. 2 consecutive transmembrane segments (helical) span residues 589-610 (HVFL…HFSW) and 664-686 (LSAY…MFLF). His675 contacts chlorophyll a'. Residues Met683 and Tyr691 each coordinate chlorophyll a. Trp692 serves as a coordination point for phylloquinone. Residues 724-744 (AVGVTHYLLGGIATTWAFFLA) traverse the membrane as a helical segment.

It belongs to the PsaA/PsaB family. The PsaA/B heterodimer binds the P700 chlorophyll special pair and subsequent electron acceptors. PSI consists of a core antenna complex that captures photons, and an electron transfer chain that converts photonic excitation into a charge separation. The eukaryotic PSI reaction center is composed of at least 11 subunits. P700 is a chlorophyll a/chlorophyll a' dimer, A0 is one or more chlorophyll a, A1 is one or both phylloquinones and FX is a shared 4Fe-4S iron-sulfur center. is required as a cofactor.

It is found in the plastid. Its subcellular location is the chloroplast thylakoid membrane. The catalysed reaction is reduced [plastocyanin] + hnu + oxidized [2Fe-2S]-[ferredoxin] = oxidized [plastocyanin] + reduced [2Fe-2S]-[ferredoxin]. Its function is as follows. PsaA and PsaB bind P700, the primary electron donor of photosystem I (PSI), as well as the electron acceptors A0, A1 and FX. PSI is a plastocyanin-ferredoxin oxidoreductase, converting photonic excitation into a charge separation, which transfers an electron from the donor P700 chlorophyll pair to the spectroscopically characterized acceptors A0, A1, FX, FA and FB in turn. Oxidized P700 is reduced on the lumenal side of the thylakoid membrane by plastocyanin. The chain is Photosystem I P700 chlorophyll a apoprotein A1 from Cucumis sativus (Cucumber).